The sequence spans 156 residues: Deoxyuridine 5'-triphosphate nucleotidohydrolase (156 aa).

Substrate is bound by residues 74 to 76, Asn87, 91 to 93, and Lys101; these read RSG and TID.

It belongs to the dUTPase family. The cofactor is Mg(2+).

It catalyses the reaction dUTP + H2O = dUMP + diphosphate + H(+). It functions in the pathway pyrimidine metabolism; dUMP biosynthesis; dUMP from dCTP (dUTP route): step 2/2. This enzyme is involved in nucleotide metabolism: it produces dUMP, the immediate precursor of thymidine nucleotides and it decreases the intracellular concentration of dUTP so that uracil cannot be incorporated into DNA. This Wolbachia sp. subsp. Brugia malayi (strain TRS) protein is Deoxyuridine 5'-triphosphate nucleotidohydrolase.